We begin with the raw amino-acid sequence, 1310 residues long: Major viral transcription factor ICP4 homolog (1310 aa).

3 disordered regions span residues alanine 117–glutamate 271, glycine 285–isoleucine 454, and glycine 636–lysine 697. A compositionally biased stretch (basic and acidic residues) spans proline 341 to glutamate 350. Low complexity-rich tracts occupy residues phenylalanine 351–serine 364, proline 392–serine 407, and proline 648–alanine 666. Residues arginine 677–lysine 685 carry the Nuclear localization signal motif. Phosphoserine; by viral VZV ORF66 occurs at positions 686 and 722. Disordered regions lie at residues glycine 1193–valine 1258 and glutamate 1282–glycine 1310. Residues arginine 1217 to glutamate 1227 are compositionally biased toward basic and acidic residues. The segment covering leucine 1228–aspartate 1250 has biased composition (acidic residues).

The protein belongs to the herpesviridae ICP4 family. In terms of assembly, interacts with IE4 and IE63. Interacts with host USF1 and SP1. Phosphorylated by ORF66 protein kinase on Ser-686 and Ser-722. Also phosphorylated by ORF47 protein kinase and by human CSNK2A1/CKII.

Its subcellular location is the host nucleus. It localises to the host cytoplasm. The protein resides in the virion tegument. Transcriptional transactivator. May interact with and recruit specific components of the general transcription machinery to viral promoters and stabilize their formation for transcription initiation. Negatively regulates its own transcription. This immediate early (EI) protein may be necessary in virion for viral pathogenesis. The chain is Major viral transcription factor ICP4 homolog from Homo sapiens (Human).